A 498-amino-acid chain; its full sequence is Bifunctional protein GlmU (498 aa).

Residues 1 to 238 (MSDAAVVILA…PALVAGVNDR (238 aa)) form a pyrophosphorylase region. Residues 9 to 12 (LAAG), Lys23, Gln80, and 85 to 86 (GT) each bind UDP-N-acetyl-alpha-D-glucosamine. Residue Asp111 coordinates Mg(2+). UDP-N-acetyl-alpha-D-glucosamine is bound by residues Gly148, Glu163, Asn178, and Asn236. Mg(2+) is bound at residue Asn236. The linker stretch occupies residues 239–259 (VQLADLGAELNRRVVAAHQRA). The interval 260-498 (GVTIVDPATT…TAKPAPATGE (239 aa)) is N-acetyltransferase. The UDP-N-acetyl-alpha-D-glucosamine site is built by Arg341 and Lys359. His371 serves as the catalytic Proton acceptor. UDP-N-acetyl-alpha-D-glucosamine-binding residues include Tyr374 and Asn385. Acetyl-CoA is bound by residues Ala388, 394–395 (NY), Ser413, and Ala431. A disordered region spans residues 470–498 (AAEAAAADGDTAAADRAAATAKPAPATGE).

This sequence in the N-terminal section; belongs to the N-acetylglucosamine-1-phosphate uridyltransferase family. The protein in the C-terminal section; belongs to the transferase hexapeptide repeat family. In terms of assembly, homotrimer. Mg(2+) is required as a cofactor.

Its subcellular location is the cytoplasm. The catalysed reaction is alpha-D-glucosamine 1-phosphate + acetyl-CoA = N-acetyl-alpha-D-glucosamine 1-phosphate + CoA + H(+). It catalyses the reaction N-acetyl-alpha-D-glucosamine 1-phosphate + UTP + H(+) = UDP-N-acetyl-alpha-D-glucosamine + diphosphate. The protein operates within nucleotide-sugar biosynthesis; UDP-N-acetyl-alpha-D-glucosamine biosynthesis; N-acetyl-alpha-D-glucosamine 1-phosphate from alpha-D-glucosamine 6-phosphate (route II): step 2/2. Its pathway is nucleotide-sugar biosynthesis; UDP-N-acetyl-alpha-D-glucosamine biosynthesis; UDP-N-acetyl-alpha-D-glucosamine from N-acetyl-alpha-D-glucosamine 1-phosphate: step 1/1. It functions in the pathway bacterial outer membrane biogenesis; LPS lipid A biosynthesis. Its function is as follows. Catalyzes the last two sequential reactions in the de novo biosynthetic pathway for UDP-N-acetylglucosamine (UDP-GlcNAc). The C-terminal domain catalyzes the transfer of acetyl group from acetyl coenzyme A to glucosamine-1-phosphate (GlcN-1-P) to produce N-acetylglucosamine-1-phosphate (GlcNAc-1-P), which is converted into UDP-GlcNAc by the transfer of uridine 5-monophosphate (from uridine 5-triphosphate), a reaction catalyzed by the N-terminal domain. In Mycolicibacterium gilvum (strain PYR-GCK) (Mycobacterium gilvum (strain PYR-GCK)), this protein is Bifunctional protein GlmU.